The chain runs to 284 residues: Formamidopyrimidine-DNA glycosylase (284 aa).

Catalysis depends on Pro2, which acts as the Schiff-base intermediate with DNA. Glu3 serves as the catalytic Proton donor. Lys58 serves as the catalytic Proton donor; for beta-elimination activity. The DNA site is built by His101, Arg120, and Arg163. Residues 248–284 (RVYDRENAPCVTAGCPDVVRRVVQSGRSSFYCPSCQR) form an FPG-type zinc finger. Arg274 (proton donor; for delta-elimination activity) is an active-site residue.

This sequence belongs to the FPG family. As to quaternary structure, monomer. Requires Zn(2+) as cofactor.

It carries out the reaction Hydrolysis of DNA containing ring-opened 7-methylguanine residues, releasing 2,6-diamino-4-hydroxy-5-(N-methyl)formamidopyrimidine.. The enzyme catalyses 2'-deoxyribonucleotide-(2'-deoxyribose 5'-phosphate)-2'-deoxyribonucleotide-DNA = a 3'-end 2'-deoxyribonucleotide-(2,3-dehydro-2,3-deoxyribose 5'-phosphate)-DNA + a 5'-end 5'-phospho-2'-deoxyribonucleoside-DNA + H(+). Involved in base excision repair of DNA damaged by oxidation or by mutagenic agents. Acts as a DNA glycosylase that recognizes and removes damaged bases. Has a preference for oxidized purines, such as 7,8-dihydro-8-oxoguanine (8-oxoG). Has AP (apurinic/apyrimidinic) lyase activity and introduces nicks in the DNA strand. Cleaves the DNA backbone by beta-delta elimination to generate a single-strand break at the site of the removed base with both 3'- and 5'-phosphates. This is Formamidopyrimidine-DNA glycosylase from Dinoroseobacter shibae (strain DSM 16493 / NCIMB 14021 / DFL 12).